The following is a 507-amino-acid chain: Anaerobic nitric oxide reductase transcription regulator NorR (507 aa).

D57 carries the post-translational modification 4-aspartylphosphate. The Sigma-54 factor interaction domain occupies I188–I417. ATP contacts are provided by residues G216–E223 and A279–E288. Residues W483–K502 constitute a DNA-binding region (H-T-H motif).

Its pathway is nitrogen metabolism; nitric oxide reduction. Its function is as follows. Required for the expression of anaerobic nitric oxide (NO) reductase, acts as a transcriptional activator for at least the norVW operon. Activation also requires sigma-54. This chain is Anaerobic nitric oxide reductase transcription regulator NorR, found in Serratia proteamaculans (strain 568).